We begin with the raw amino-acid sequence, 728 residues long: Tripartite terminase subunit 1 (728 aa).

The C3H1-type zinc finger occupies cysteine 186–histidine 214. The disordered stretch occupies residues alanine 239–aspartate 278. The segment covering glycine 247 to glutamate 257 has biased composition (basic and acidic residues). Over residues aspartate 258 to proline 269 the composition is skewed to acidic residues. Residue tyrosine 653–serine 660 participates in ATP binding.

Belongs to the herpesviridae TRM1 protein family. Associates with TRM2 and TRM3 to form the tripartite terminase complex. Interacts with portal protein.

The protein resides in the host nucleus. Component of the molecular motor that translocates viral genomic DNA in empty capsid during DNA packaging. Forms a tripartite terminase complex together with TRM2 and TRM3 in the host cytoplasm. Once the complex reaches the host nucleus, it interacts with the capsid portal vertex. This portal forms a ring in which genomic DNA is translocated into the capsid. TRM1 carries an endonuclease activity that plays an important role for the cleavage of concatemeric viral DNA into unit length genomes. The sequence is that of Tripartite terminase subunit 1 from Equine herpesvirus 2 (strain 86/87) (EHV-2).